The chain runs to 228 residues: Expansin-B13 (228 aa).

A signal peptide spans 1 to 22; it reads MASSSLLLASVVVAAMVSAVSC. N-linked (GlcNAc...) asparagine glycosylation is present at asparagine 32. Positions 61–172 constitute an Expansin-like EG45 domain; sequence SGACGYKDVD…KEKGSEEWKA (112 aa). 2 disulfides stabilise this stretch: cysteine 64–cysteine 92 and cysteine 100–cysteine 106. Residues 142–223 enclose the Expansin-like CBD domain; that stretch reads GKDEELLKYV…GWKADSVYKS (82 aa).

The protein belongs to the expansin family. Expansin B subfamily.

It is found in the secreted. Its subcellular location is the cell wall. The protein resides in the membrane. May cause loosening and extension of plant cell walls by disrupting non-covalent bonding between cellulose microfibrils and matrix glucans. No enzymatic activity has been found. May be required for rapid internodal elongation in deepwater rice during submergence. This chain is Expansin-B13 (EXPB13), found in Oryza sativa subsp. japonica (Rice).